A 481-amino-acid polypeptide reads, in one-letter code: Cysteine--tRNA ligase (481 aa).

Position 29 (Cys29) interacts with Zn(2+). The 'HIGH' region signature appears at 31-41 (VTVYDYCHIGH). Cys209, His234, and Glu238 together coordinate Zn(2+). Residues 266 to 270 (KMSKS) carry the 'KMSKS' region motif. Lys269 is a binding site for ATP.

The protein belongs to the class-I aminoacyl-tRNA synthetase family. In terms of assembly, monomer. Zn(2+) is required as a cofactor.

It is found in the cytoplasm. The catalysed reaction is tRNA(Cys) + L-cysteine + ATP = L-cysteinyl-tRNA(Cys) + AMP + diphosphate. The sequence is that of Cysteine--tRNA ligase from Syntrophotalea carbinolica (strain DSM 2380 / NBRC 103641 / GraBd1) (Pelobacter carbinolicus).